The primary structure comprises 196 residues: Alpha-crystallin A chain (196 aa).

M1 is modified (N-acetylmethionine). A required for complex formation with BFSP1 and BFSP2 region spans residues 1–63 (MDVTIQHPWF…RTVLDSGISE (63 aa)). The residue at position 6 (Q6) is a Deamidated glutamine; partial. S45 is modified (phosphoserine). Q50 is modified (deamidated glutamine; partial). Residues 76 to 185 (HAGNPKNNPG…GHSERAIPVS (110 aa)) enclose the sHSP domain. 2 positions are modified to N6-acetyllysine: K93 and K122. H123 contacts Zn(2+). Position 124 is a deamidated asparagine; partial (N124). Zn(2+) contacts are provided by E125 and H130. S145 carries the post-translational modification Phosphoserine. At N146 the chain carries Deamidated asparagine; partial. Residues 168 to 196 (KVQSGLDAGHSERAIPVSREEKPSSAPSS) are disordered. Q170 is modified (deamidated glutamine; partial). The span at 176-190 (GHSERAIPVSREEKP) shows a compositional bias: basic and acidic residues. Position 177 (H177) interacts with Zn(2+). S185 carries O-linked (GlcNAc) serine glycosylation.

This sequence belongs to the small heat shock protein (HSP20) family. In terms of assembly, heteropolymer composed of three CRYAA and one CRYAB subunits. Inter-subunit bridging via zinc ions enhances stability, which is crucial as there is no protein turn over in the lens. Can also form homodimers and homotetramers (dimers of dimers) which serve as the building blocks of homooligomers. Within homooligomers, the zinc-binding motif is created from residues of 3 different molecules. His-123 and Glu-125 from one molecule are ligands of the zinc ion, and His-130 and His-177 residues from additional molecules complete the site with tetrahedral coordination geometry. Part of a complex required for lens intermediate filament formation composed of BFSP1, BFSP2 and CRYAA. Post-translationally, acetylation at Lys-93 may increase chaperone activity. Undergoes age-dependent proteolytical cleavage at the C-terminus. Cleavage by m-calpain produces specifically alpha-crystallin A(1-162), cleavage by Capn3/Lp82 produces specifically alpha-crystallin A(1-168) which is the major truncated form during normal maturation and induced cataract formation. In terms of tissue distribution, highly expressed in eye lens. Also expressed in non-lenticular tissues such as brain, spleen, liver, lung, skin, small intestine and a several epithelial and fibroblast cell lines with highest levels in spleen.

The protein resides in the cytoplasm. Its subcellular location is the nucleus. Contributes to the transparency and refractive index of the lens. Acts as a chaperone, preventing aggregation of various proteins under a wide range of stress conditions. Required for the correct formation of lens intermediate filaments as part of a complex composed of BFSP1, BFSP2 and CRYAA. In terms of biological role, inhibits bacterial growth in the lens. The chain is Alpha-crystallin A chain (Cryaa) from Rattus norvegicus (Rat).